The sequence spans 121 residues: Acid shock protein (121 aa).

The signal sequence occupies residues methionine 1–alanine 21. A propeptide spanning residues alanine 22 to glutamine 63 is cleaved from the precursor. The interval alanine 40–alanine 121 is disordered. Low complexity predominate over residues valine 74–glutamine 83. Residues alanine 84–serine 93 show a composition bias toward basic residues. Over residues valine 94–glutamine 103 the composition is skewed to low complexity. A compositionally biased stretch (basic residues) spans alanine 104–lysine 113.

The protein belongs to the Asr family. Proteolytic processing gives rise to the active protein.

It localises to the periplasm. In terms of biological role, required for growth and/or survival at acidic conditions. The polypeptide is Acid shock protein (Yersinia pseudotuberculosis serotype O:1b (strain IP 31758)).